The following is a 793-amino-acid chain: Protein PAT1 homolog (793 aa).

Residues S200 and S208 each carry the phosphoserine modification. Disordered stretches follow at residues 203–256 (PPGS…TGNR) and 292–312 (MLQQPPHQNGLMPPQMQGSQN). Residues 219–242 (PYQSGGPQMGSPNFSPFPNLQPQL) are compositionally biased toward polar residues. A phosphoserine mark is found at S342 and S343. Residues 476 to 501 (RPLLEVDPPNSAKFGNAEHKPTDKPL) are disordered. A compositionally biased stretch (basic and acidic residues) spans 491–501 (NAEHKPTDKPL).

In terms of assembly, interacts with MPK4 and SUMM2. Phosphorylated at Ser-208 by MPK4 upon flg22 elicitation. Phosphorylated at Ser-200, Ser-342 and Ser-343 upon flg22 elicitation.

It localises to the cytoplasm. The protein localises to the P-body. Activator of mRNA decapping. Involved in mRNA decay via decapping. Involved in disease resistance in response to biotrophic and necrotrophic pathogens. Is part of a signaling pathway including MPK4 and the disease resistance protein SUMM2. This Arabidopsis thaliana (Mouse-ear cress) protein is Protein PAT1 homolog.